Reading from the N-terminus, the 156-residue chain is Arginine repressor (156 aa).

It belongs to the ArgR family.

The protein localises to the cytoplasm. The protein operates within amino-acid biosynthesis; L-arginine biosynthesis [regulation]. Functionally, regulates arginine biosynthesis genes. The polypeptide is Arginine repressor (Aliivibrio fischeri (strain ATCC 700601 / ES114) (Vibrio fischeri)).